The primary structure comprises 463 residues: Cytidylate cyclase (463 aa).

The Guanylate cyclase domain maps to 122–231 (VTMFMDIIGS…IGIRIGIDLG (110 aa)). Phe125 serves as a coordination point for a ribonucleoside 5'-triphosphate. Residues Asp127, Ile128, and Asp171 each coordinate Mn(2+). Residues 334-454 (KPSRIKVVIS…VISNDTVIER (121 aa)) form an AGS-C domain region.

Belongs to the adenylyl cyclase class-4/guanylyl cyclase family. Pyrimidine cyclase subfamily. In terms of assembly, homodimer. Mn(2+) serves as cofactor.

Its subcellular location is the cytoplasm. The enzyme catalyses CTP = 3',5'-cyclic CMP + diphosphate. Its function is as follows. Pycsar (pyrimidine cyclase system for antiphage resistance) provides immunity against bacteriophage. The pyrimidine cyclase (PycC) synthesizes cyclic nucleotides in response to infection; these serve as specific second messenger signals. The signal activates the adjacent effector, leading to bacterial cell death and abortive phage infection. A clade E Pycsar system. Functionally, the pyrimidine cyclase gene of a two-gene Pycsar system, generates cyclic CMP (cCMP) from CTP in response to bacteriophage infection. Has little to no activity on ATP, GTP or UTP. Expression of this and adjacent effector Ec303145PycTM (AC P0DV27) confers resistance to bacteriophage P1, T5, lambda-vir and phi27. The sequence is that of Cytidylate cyclase from Escherichia coli.